The primary structure comprises 240 residues: Adenosylcobinamide-GDP ribazoletransferase (240 aa).

A run of 5 helical transmembrane segments spans residues 31-51 (LLYY…ASHL), 57-77 (APLH…ALHL), 109-129 (IAVV…WVLV), 133-153 (VGAQ…GLFL), and 185-205 (LFCL…FAWL).

This sequence belongs to the CobS family. Mg(2+) serves as cofactor.

It localises to the cell inner membrane. The catalysed reaction is alpha-ribazole + adenosylcob(III)inamide-GDP = adenosylcob(III)alamin + GMP + H(+). It catalyses the reaction alpha-ribazole 5'-phosphate + adenosylcob(III)inamide-GDP = adenosylcob(III)alamin 5'-phosphate + GMP + H(+). Its pathway is cofactor biosynthesis; adenosylcobalamin biosynthesis; adenosylcobalamin from cob(II)yrinate a,c-diamide: step 7/7. Functionally, joins adenosylcobinamide-GDP and alpha-ribazole to generate adenosylcobalamin (Ado-cobalamin). Also synthesizes adenosylcobalamin 5'-phosphate from adenosylcobinamide-GDP and alpha-ribazole 5'-phosphate. The chain is Adenosylcobinamide-GDP ribazoletransferase from Pseudomonas putida (strain GB-1).